The primary structure comprises 402 residues: CCA-adding enzyme (402 aa).

Positions 32 and 35 each coordinate ATP. 2 residues coordinate CTP: Gly-32 and Arg-35. The Mg(2+) site is built by Asp-45 and Asp-47. 5 residues coordinate ATP: Arg-119, Asp-162, Arg-165, Arg-168, and Arg-171. Residues Arg-119, Asp-162, Arg-165, Arg-168, and Arg-171 each contribute to the CTP site.

The protein belongs to the tRNA nucleotidyltransferase/poly(A) polymerase family. Bacterial CCA-adding enzyme type 3 subfamily. In terms of assembly, homodimer. Mg(2+) serves as cofactor.

It catalyses the reaction a tRNA precursor + 2 CTP + ATP = a tRNA with a 3' CCA end + 3 diphosphate. The catalysed reaction is a tRNA with a 3' CCA end + 2 CTP + ATP = a tRNA with a 3' CCACCA end + 3 diphosphate. Functionally, catalyzes the addition and repair of the essential 3'-terminal CCA sequence in tRNAs without using a nucleic acid template. Adds these three nucleotides in the order of C, C, and A to the tRNA nucleotide-73, using CTP and ATP as substrates and producing inorganic pyrophosphate. tRNA 3'-terminal CCA addition is required both for tRNA processing and repair. Also involved in tRNA surveillance by mediating tandem CCA addition to generate a CCACCA at the 3' terminus of unstable tRNAs. While stable tRNAs receive only 3'-terminal CCA, unstable tRNAs are marked with CCACCA and rapidly degraded. The sequence is that of CCA-adding enzyme from Lactococcus lactis subsp. cremoris (strain SK11).